The primary structure comprises 123 residues: MDYEFQRDLTGGILARFSMDHEAIGYWLNDEIQGDISLIDQILTEMDEVKGSEKQWQLIGKEYSLSIDDEEIMVRANTLHFETDDLEEGMSYYDNESIAFCGLDDFATMLQKYRLFILENRRS.

The protein belongs to the UPF0231 family.

In Proteus mirabilis (strain HI4320), this protein is UPF0231 protein PMI2039.